We begin with the raw amino-acid sequence, 179 residues long: MLDLILKTIWLLLPCYTPNNFAVLVGGGTPIDFGKTFVDGKRILGDGKTWRGFVGGVAGGVLTANLQYAIEKLSGLAIYSSLPFNEFFTLTFLLAFGAMFGDLCGSFIKRRFGYERGSRFLIVDQLMFLLVALLIASLYPPFWKLFTAEIIALAVIITPALHMGINYIAYRLNLKEVPW.

Helical transmembrane passes span 53-73 (FVGG…IEKL), 88-108 (FTLT…GSFI), 120-140 (FLIV…SLYP), and 145-165 (LFTA…HMGI).

This sequence belongs to the CDP-archaeol synthase family. Mg(2+) serves as cofactor.

The protein resides in the cell membrane. The catalysed reaction is 2,3-bis-O-(geranylgeranyl)-sn-glycerol 1-phosphate + CTP + H(+) = CDP-2,3-bis-O-(geranylgeranyl)-sn-glycerol + diphosphate. It functions in the pathway membrane lipid metabolism; glycerophospholipid metabolism. Functionally, catalyzes the formation of CDP-2,3-bis-(O-geranylgeranyl)-sn-glycerol (CDP-archaeol) from 2,3-bis-(O-geranylgeranyl)-sn-glycerol 1-phosphate (DGGGP) and CTP. This reaction is the third ether-bond-formation step in the biosynthesis of archaeal membrane lipids. Can use CTP or dCTP, but not ATP, GTP or TTP. The polypeptide is CDP-archaeol synthase (Archaeoglobus fulgidus (strain ATCC 49558 / DSM 4304 / JCM 9628 / NBRC 100126 / VC-16)).